The primary structure comprises 218 residues: Molybdenum cofactor guanylyltransferase (218 aa).

Residues 16 to 18, Lys28, Asn56, Asp74, and Asp109 contribute to the GTP site; that span reads LAG. Asp109 is a binding site for Mg(2+).

Belongs to the MobA family. Monomer. Mg(2+) is required as a cofactor.

It is found in the cytoplasm. It catalyses the reaction Mo-molybdopterin + GTP + H(+) = Mo-molybdopterin guanine dinucleotide + diphosphate. Functionally, transfers a GMP moiety from GTP to Mo-molybdopterin (Mo-MPT) cofactor (Moco or molybdenum cofactor) to form Mo-molybdopterin guanine dinucleotide (Mo-MGD) cofactor. The polypeptide is Molybdenum cofactor guanylyltransferase (Rhizobium meliloti (strain 1021) (Ensifer meliloti)).